The sequence spans 414 residues: Esterase FrsA (414 aa).

It belongs to the FrsA family.

It carries out the reaction a carboxylic ester + H2O = an alcohol + a carboxylate + H(+). Catalyzes the hydrolysis of esters. The protein is Esterase FrsA of Shigella boydii serotype 18 (strain CDC 3083-94 / BS512).